The sequence spans 438 residues: Putative galacturan 1,4-alpha-galacturonidase A (438 aa).

A signal peptide spans 1–21 (MRMPSAISIGVFAGLSLAASA). N-linked (GlcNAc...) asparagine glycans are attached at residues Asn28, Asn102, Asn111, and Asn197. PbH1 repeat units follow at residues 186–222 (SSHI…DTYR) and 223–244 (SDHI…AFKG). Asp237 serves as the catalytic Proton donor. 7 N-linked (GlcNAc...) asparagine glycosylation sites follow: Asn245, Asn253, Asn279, Asn325, Asn353, Asn372, and Asn388. 3 PbH1 repeats span residues 246–266 (STNI…AFGS), 277–303 (VENV…YFKS), and 323–344 (VRNV…YIDT). The cysteines at positions 397 and 403 are disulfide-linked. Asn418 carries an N-linked (GlcNAc...) asparagine glycan.

The protein belongs to the glycosyl hydrolase 28 family.

It localises to the secreted. It catalyses the reaction [(1-&gt;4)-alpha-D-galacturonosyl](n) + H2O = alpha-D-galacturonate + [(1-&gt;4)-alpha-D-galacturonosyl](n-1). Its function is as follows. Specific in hydrolyzing the terminal glycosidic bond of polygalacturonic acid and oligogalacturonates. This is Putative galacturan 1,4-alpha-galacturonidase A (rgxA) from Aspergillus niger.